We begin with the raw amino-acid sequence, 211 residues long: Dof zinc finger protein 5 (211 aa).

The tract at residues 37–101 (FVVAREKVEP…QRRLQDSAEA (65 aa)) is disordered. The span at 68–80 (IKREAADRDEEQR) shows a compositional bias: basic and acidic residues. The segment at 109–163 (LPCPRCRSRDTKFCYFNNYNVNQPRHFCKACHRYWTAGGALRNVPVGAGRRKNRP) adopts a Dof-type zinc-finger fold. Zn(2+) is bound by residues cysteine 111, cysteine 114, cysteine 136, and cysteine 139. A disordered region spans residues 191–211 (SPTSPSPVYTDRWPVTPDRPF).

It localises to the nucleus. Its function is as follows. Transcription factor that may transactivate seed storage protein genes in developing seeds. The polypeptide is Dof zinc finger protein 5 (Oryza sativa subsp. japonica (Rice)).